The following is a 150-amino-acid chain: Large ribosomal subunit protein bL9 (150 aa).

It belongs to the bacterial ribosomal protein bL9 family.

Its function is as follows. Binds to the 23S rRNA. In Stenotrophomonas maltophilia (strain R551-3), this protein is Large ribosomal subunit protein bL9.